The chain runs to 635 residues: Frizzled and smoothened-like protein C (635 aa).

The N-terminal stretch at 1–20 (MKFKLIIFIIIIYIIKILKS) is a signal peptide. Residues 21–244 (EILNEFGYGL…NKWVQMYKMS (224 aa)) lie on the Extracellular side of the membrane. The FZ domain occupies 32–166 (DENLKCLSFI…LTKYGYTENN (135 aa)). Disulfide bonds link Cys37/Cys108 and Cys50/Cys101. N-linked (GlcNAc...) asparagine glycosylation is found at Asn65, Asn141, Asn156, Asn185, and Asn203. A helical transmembrane segment spans residues 245 to 265 (IVLSTLSFICSIYNIITFGLL). Residues 266 to 275 (SKLKSKYNLC) are Cytoplasmic-facing. A helical membrane pass occupies residues 276 to 296 (ITFFSVSTVLMSLMDIVTYGI). The Extracellular portion of the chain corresponds to 297–314 (GYEELLCPESGRYAIQSD). A helical transmembrane segment spans residues 315-335 (VACGVTGAFFHIGITTGVLWW). Over 336-356 (TTMSICLYSEVKRFKMISFRY) the chain is Cytoplasmic. The helical transmembrane segment at 357–377 (IIIFNSVISLILLIIPLSGQA) threads the bilayer. Residues 378-398 (FMSGNGSLGCWIRKTWYANGT) are Extracellular-facing. N-linked (GlcNAc...) asparagine glycans are attached at residues Asn382 and Asn396. A helical membrane pass occupies residues 399-419 (FWIPCGISLFIGAICIVLVIY). Over 420–440 (EIFKISRNLSKDNKPLMFQIR) the chain is Cytoplasmic. A helical membrane pass occupies residues 441-461 (PFLCVLLVGGSFLYLFIFYFN). Residues 462 to 496 (NERNLDKYKAAIPSYVQCLLSSDENGEDCLTDGPG) lie on the Extracellular side of the membrane. Residues 497–517 (FGAYFTFYFFTRLFGITSFSI) form a helical membrane-spanning segment. Residues 518–635 (YGTSKIARDI…SSKDSNTNSF (118 aa)) are Cytoplasmic-facing. Over residues 559–594 (SISGSNQKRFNRNGSNFNMKQNKSNPNDSISLSVVE) the composition is skewed to polar residues. Residues 559 to 635 (SISGSNQKRF…SSKDSNTNSF (77 aa)) form a disordered region. Residues 594–623 (ESTKKQDTENELESNIETKENRSTDISIEN) adopt a coiled-coil conformation. Residues 623–635 (NTTSSKDSNTNSF) are compositionally biased toward low complexity.

The protein belongs to the G-protein coupled receptor Fz/Smo family.

It is found in the membrane. This Dictyostelium discoideum (Social amoeba) protein is Frizzled and smoothened-like protein C (fslC).